We begin with the raw amino-acid sequence, 115 residues long: NADH-ubiquinone oxidoreductase chain 3 (115 aa).

A run of 3 helical transmembrane segments spans residues 3-23 (LMLALTVNTLLTALLTIIMFW), 55-75 (FFLVAITFLLFDLEIALLLSL), and 84-104 (LPTMIKTSIMFITILALSLAY).

Belongs to the complex I subunit 3 family. Core subunit of respiratory chain NADH dehydrogenase (Complex I) which is composed of 45 different subunits. Interacts with TMEM186. Interacts with TMEM242.

Its subcellular location is the mitochondrion inner membrane. The enzyme catalyses a ubiquinone + NADH + 5 H(+)(in) = a ubiquinol + NAD(+) + 4 H(+)(out). Its function is as follows. Core subunit of the mitochondrial membrane respiratory chain NADH dehydrogenase (Complex I) which catalyzes electron transfer from NADH through the respiratory chain, using ubiquinone as an electron acceptor. Essential for the catalytic activity of complex I. The chain is NADH-ubiquinone oxidoreductase chain 3 from Papio hamadryas (Hamadryas baboon).